The following is a 294-amino-acid chain: BOI-related E3 ubiquitin-protein ligase 1 (294 aa).

The interval 168 to 204 is WRD domain; that stretch reads LQERVKNLYVENQIWRDLAQTNEATANNLRSNLEQVL. The stretch at 183-212 forms a coiled coil; that stretch reads RDLAQTNEATANNLRSNLEQVLAQVDDLDA. The segment at 244-281 adopts an RING-type zinc-finger fold; it reads CKRCGELTASVLVLPCRHLCLCTVCGSSALLRTCPVCD.

As to quaternary structure, interacts with the DELLA proteins GAI, RGA, RGL1, RGL2 and RGL3.

It catalyses the reaction S-ubiquitinyl-[E2 ubiquitin-conjugating enzyme]-L-cysteine + [acceptor protein]-L-lysine = [E2 ubiquitin-conjugating enzyme]-L-cysteine + N(6)-ubiquitinyl-[acceptor protein]-L-lysine.. The protein operates within protein degradation; proteasomal ubiquitin-dependent pathway. Its function is as follows. E3 ubiquitin-protein ligase involved in regulation of abiotic stress responses. Not involved in ubiquitination of MYB108/BOS1. Has no effect on the stability of the DELLA proteins. This is BOI-related E3 ubiquitin-protein ligase 1 (BRG1) from Arabidopsis thaliana (Mouse-ear cress).